The following is a 166-amino-acid chain: Lipoprotein signal peptidase (166 aa).

The next 3 helical transmembrane spans lie at 12–32 (WLWV…LILQ), 70–90 (WFFS…MYRS), and 102–122 (ALII…GFVV). Catalysis depends on residues Asp-123 and Asp-141. A helical transmembrane segment spans residues 137–157 (FNLADSAICIGAALIVLEGFL).

The protein belongs to the peptidase A8 family.

The protein localises to the cell inner membrane. The catalysed reaction is Release of signal peptides from bacterial membrane prolipoproteins. Hydrolyzes -Xaa-Yaa-Zaa-|-(S,diacylglyceryl)Cys-, in which Xaa is hydrophobic (preferably Leu), and Yaa (Ala or Ser) and Zaa (Gly or Ala) have small, neutral side chains.. It participates in protein modification; lipoprotein biosynthesis (signal peptide cleavage). Its function is as follows. This protein specifically catalyzes the removal of signal peptides from prolipoproteins. In Klebsiella pneumoniae subsp. pneumoniae (strain ATCC 700721 / MGH 78578), this protein is Lipoprotein signal peptidase.